Consider the following 436-residue polypeptide: UPF0597 protein YhaM (436 aa).

Belongs to the UPF0597 family.

This is UPF0597 protein YhaM from Salmonella paratyphi A (strain ATCC 9150 / SARB42).